We begin with the raw amino-acid sequence, 362 residues long: sn-glycerol-3-phosphate import ATP-binding protein UgpC (362 aa).

Residues L4–I235 form the ABC transporter domain. Position 37-44 (G37–S44) interacts with ATP.

Belongs to the ABC transporter superfamily. sn-glycerol-3-phosphate importer (TC 3.A.1.1.3) family. As to quaternary structure, the complex is composed of two ATP-binding proteins (UgpC), two transmembrane proteins (UgpA and UgpE) and a solute-binding protein (UgpB).

It is found in the cell inner membrane. The enzyme catalyses sn-glycerol 3-phosphate(out) + ATP + H2O = sn-glycerol 3-phosphate(in) + ADP + phosphate + H(+). Part of the ABC transporter complex UgpBAEC involved in sn-glycerol-3-phosphate (G3P) import. Responsible for energy coupling to the transport system. In Bordetella pertussis (strain Tohama I / ATCC BAA-589 / NCTC 13251), this protein is sn-glycerol-3-phosphate import ATP-binding protein UgpC.